Reading from the N-terminus, the 518-residue chain is Probable protein phosphatase 2C 14 (518 aa).

2 stretches are compositionally biased toward low complexity: residues 1–10 (MVEAAAGRRS) and 86–105 (PQRQ…APGA). Disordered regions lie at residues 1 to 31 (MVEA…QQHQ) and 86 to 108 (PQRQ…ADGR). A PPM-type phosphatase domain is found at 129–437 (VASLYTLQGK…DDCAVVCLFL (309 aa)). Residues Asp-165 and Gly-166 each coordinate Mn(2+). The tract at residues 192 to 222 (TDEGRQTSTSSIKSNGDETGSPGNMGRDAEQ) is disordered. Polar residues predominate over residues 197–213 (QTSTSSIKSNGDETGSP). 2 residues coordinate Mn(2+): Asp-382 and Asp-428.

This sequence belongs to the PP2C family. It depends on Mg(2+) as a cofactor. The cofactor is Mn(2+).

It carries out the reaction O-phospho-L-seryl-[protein] + H2O = L-seryl-[protein] + phosphate. The enzyme catalyses O-phospho-L-threonyl-[protein] + H2O = L-threonyl-[protein] + phosphate. This Oryza sativa subsp. japonica (Rice) protein is Probable protein phosphatase 2C 14.